The primary structure comprises 365 residues: 4-hydroxy-tetrahydrodipicolinate synthase 1, chloroplastic (365 aa).

The N-terminal 39 residues, 1–39 (MSALKNYGLISIDSALHFPRSNQLQSYKRRNAKWVSPIA), are a transit peptide targeting the chloroplast. Residue T108 participates in pyruvate binding. Y194 acts as the Proton donor/acceptor in catalysis. K222 serves as the catalytic Schiff-base intermediate with substrate. I261 is a binding site for pyruvate.

It belongs to the DapA family.

The protein resides in the plastid. It is found in the chloroplast. The catalysed reaction is L-aspartate 4-semialdehyde + pyruvate = (2S,4S)-4-hydroxy-2,3,4,5-tetrahydrodipicolinate + H2O + H(+). It functions in the pathway amino-acid biosynthesis; L-lysine biosynthesis via DAP pathway; (S)-tetrahydrodipicolinate from L-aspartate: step 3/4. Its function is as follows. Catalyzes the condensation of (S)-aspartate-beta-semialdehyde [(S)-ASA] and pyruvate to 4-hydroxy-tetrahydrodipicolinate (HTPA). The protein is 4-hydroxy-tetrahydrodipicolinate synthase 1, chloroplastic (DHDPS1) of Arabidopsis thaliana (Mouse-ear cress).